Reading from the N-terminus, the 204-residue chain is MKVKICGITDMETAKRACEYGADALGFVFAESKRKITPGLAKEIIQELPANVLKIGVFVNESVEVIQKITENCGLTHVQLHGDEDNHQIRRLNIPSIKALGVTSEIDMKNAQAYKTDYILFDSPKERFYGGNGKKFSWELLAHMSKKLREKTILAGGLNALNIEEAIRTVRPYMVDVSSGVETEGKKDVEKIKQFIIKAKECSK.

Belongs to the TrpF family.

It carries out the reaction N-(5-phospho-beta-D-ribosyl)anthranilate = 1-(2-carboxyphenylamino)-1-deoxy-D-ribulose 5-phosphate. The protein operates within amino-acid biosynthesis; L-tryptophan biosynthesis; L-tryptophan from chorismate: step 3/5. In Bacillus cereus (strain AH187), this protein is N-(5'-phosphoribosyl)anthranilate isomerase.